The sequence spans 93 residues: Hematopoietic cell signal transducer (93 aa).

The first 18 residues, 1–18 (MIHLGHILFLLLLPVAAA), serve as a signal peptide directing secretion. Residues 19–48 (QTTPGERSSLPAFYPGTSGSCSGCGSLSLP) lie on the Extracellular side of the membrane. The chain crosses the membrane as a helical span at residues 49 to 69 (LLAGLVAADAVASLLIVGAVF). At 70–93 (LCARPRRSPAQEDGKVYINMPGRG) the chain is on the cytoplasmic side. The residue at position 86 (Tyr-86) is a Phosphotyrosine. Residues 86–88 (YIN) are GRB2 binding site. Residues 86–89 (YINM) form a PIK3R1 binding site region.

The protein belongs to the DAP10 family. As to quaternary structure, interacts with CLEC5A. Forms an CLEC5A/TYROBP/HCST trimolecular complex depending almost solely on TYROBP. Homodimer; Disulfide-linked. Heterohexamer composed of four subunits of HCST/DAP10 and two subunits of KLRK1. Interacts (via transmembrane domain) with KLRK1 (via transmembrane domain); the interaction is required for KLRK1 NK cell surface and induces NK cell-mediated cytotoxicity. Interacts with PIK3R1 and GRB2. Interacts with CD300H. In terms of processing, phosphorylated; PIK3R1 and GRB2 associate specifically with tyrosine-phosphorylated HCST. O-glycosylated. In terms of tissue distribution, predominantly expressed in hemopoietic cells such as NK cells, subset of T-cells and monocytes. Detected in leukocytes, spleen, and thymus.

It is found in the membrane. In terms of biological role, transmembrane adapter protein which associates with KLRK1 to form an activation receptor KLRK1-HCST in lymphoid and myeloid cells; this receptor plays a major role in triggering cytotoxicity against target cells expressing cell surface ligands such as MHC class I chain-related MICA and MICB, and UL16-binding proteins (ULBPs); these ligands are up-regulated by stress conditions and pathological state such as viral infection and tumor transformation. Functions as a docking site for PI3-kinase PIK3R1 and GRB2. Interaction of ULBPs with KLRK1-HCST triggers calcium mobilization and activation of the PIK3R1, MAP2K/ERK, and JAK2/STAT5 signaling pathways. Both PIK3R1 and GRB2 are required for full KLRK1-HCST-mediated activation and ultimate killing of target cells. In NK cells, KLRK1-HCST signaling directly induces cytotoxicity and enhances cytokine production initiated via DAP12/TYROBP-associated receptors. In T-cells, it provides primarily costimulation for TCR-induced signals. KLRK1-HCST receptor plays a role in immune surveillance against tumors and is required for cytolysis of tumors cells; indeed, melanoma cells that do not express KLRK1 ligands escape from immune surveillance mediated by NK cells. The chain is Hematopoietic cell signal transducer (HCST) from Homo sapiens (Human).